The primary structure comprises 902 residues: Protein translocase subunit SecA (902 aa).

Residues Gln87, 105 to 109, and Asp512 each bind ATP; that span reads GEGKT. Positions 847 to 902 are disordered; that stretch reads DAERLARQQQLSHLDDQSAAAQEMASQTGDRKIGRNDPCPCGSGKKYKQCHGRLNA. Residues Cys885, Cys887, Cys896, and His897 each coordinate Zn(2+). The segment covering 891–902 has biased composition (basic residues); the sequence is KKYKQCHGRLNA.

Belongs to the SecA family. Monomer and homodimer. Part of the essential Sec protein translocation apparatus which comprises SecA, SecYEG and auxiliary proteins SecDF-YajC and YidC. The cofactor is Zn(2+).

It is found in the cell inner membrane. The protein localises to the cytoplasm. The enzyme catalyses ATP + H2O + cellular proteinSide 1 = ADP + phosphate + cellular proteinSide 2.. Functionally, part of the Sec protein translocase complex. Interacts with the SecYEG preprotein conducting channel. Has a central role in coupling the hydrolysis of ATP to the transfer of proteins into and across the cell membrane, serving both as a receptor for the preprotein-SecB complex and as an ATP-driven molecular motor driving the stepwise translocation of polypeptide chains across the membrane. The sequence is that of Protein translocase subunit SecA from Edwardsiella ictaluri (strain 93-146).